An 822-amino-acid polypeptide reads, in one-letter code: ATP-dependent zinc metalloprotease FTSH 7, chloroplastic (822 aa).

Low complexity-rich tracts occupy residues 1-34, 80-94, and 101-122; these read MASASAAAETLAAASLPVASPSRSLLRPLPRRAS, AEASGPGEASSSSSG, and AAAAAEAGGDGASTSTTSAAAT. 2 disordered regions span residues 1 to 44 and 67 to 136; these read MASA…ASVR and PAAR…ENKW. A chloroplast-targeting transit peptide spans 1-70; that stretch reads MASASAAAET…RVLRRPPAAR (70 aa). The next 2 membrane-spanning stretches (helical) occupy residues 154 to 174 and 288 to 308; these read IVQGREMGFLLLQLGFAIFAL and GGLLNSALVALIYVVLIAVVL. 386–393 provides a ligand contact to ATP; sequence GLPGTGKT. His611 is a binding site for Zn(2+). The active site involves Glu612. Positions 615 and 694 each coordinate Zn(2+).

This sequence in the N-terminal section; belongs to the AAA ATPase family. The protein in the C-terminal section; belongs to the peptidase M41 family. Zn(2+) is required as a cofactor.

The protein resides in the plastid. It localises to the chloroplast thylakoid membrane. Functionally, probable ATP-dependent zinc metallopeptidase. In Oryza sativa subsp. japonica (Rice), this protein is ATP-dependent zinc metalloprotease FTSH 7, chloroplastic (FTSH7).